The chain runs to 579 residues: Basic helix-loop-helix ARNT-like protein 2 (579 aa).

An interaction with PER2 region spans residues 1–198 (MEFPRKRRGR…SPREKPIDTK (198 aa)). The Nuclear localization signal motif lies at 4–9 (PRKRRG). A disordered region spans residues 40-61 (RTGVSAPSGIREAHSQMEKRRR). In terms of domain architecture, bHLH spans 48 to 101 (GIREAHSQMEKRRRDKMNHLIQKLSSMIPPHIPTAHKLDKLSVLRRAVQYLRSL). A compositionally biased stretch (basic and acidic residues) spans 50–59 (REAHSQMEKR). The Nuclear export signal 1 motif lies at 118–128 (IQDKELSHLIL). In terms of domain architecture, PAS 1 spans 119–190 (QDKELSHLIL…KEQLSCDGSP (72 aa)). Basic and acidic residues predominate over residues 186-196 (CDGSPREKPID). Residues 186–213 (CDGSPREKPIDTKTSQVYSHPYTGRPRM) form a disordered region. Lys226 participates in a covalent cross-link: Glycyl lysine isopeptide (Lys-Gly) (interchain with G-Cter in SUMO2 and SUMO3). Lys233 is covalently cross-linked (Glycyl lysine isopeptide (Lys-Gly) (interchain with G-Cter in SUMO2)). The region spanning 296–366 (VPQKSGKINV…DKHKAVLQSK (71 aa)) is the PAS 2 domain. Residues 331-339 (LGYLPQELL) carry the Nuclear export signal 2 motif. One can recognise a PAC domain in the interval 371-414 (TDSYKFRVKDGAFVTLKSEWFSFTNPWTKELEYIVSVNTLVLGR). The interval 469–536 (RLHSSSPEDA…AHPHGPLPGD (68 aa)) is disordered.

As to quaternary structure, component of the circadian core oscillator, which includes the CRY proteins, CLOCK, or NPAS2, BMAL1 or BMAL2, CSNK1D and/or CSNK1E, TIMELESS and the PER proteins. Interacts directly with CLOCK to form the BMAL2-CLOCK transactivator. Can form heterodimers or homodimers which interact directly with CLOCK to form the transcription activator. Interacts with NPAS2 and HIF1A. Interacts with PER2. As to expression, expressed in the suprachiasmatic nucleus (SCN).

It is found in the nucleus. Transcriptional activator which forms a core component of the circadian clock. The circadian clock, an internal time-keeping system, regulates various physiological processes through the generation of approximately 24 hour circadian rhythms in gene expression, which are translated into rhythms in metabolism and behavior. It is derived from the Latin roots 'circa' (about) and 'diem' (day) and acts as an important regulator of a wide array of physiological functions including metabolism, sleep, body temperature, blood pressure, endocrine, immune, cardiovascular, and renal function. Consists of two major components: the central clock, residing in the suprachiasmatic nucleus (SCN) of the brain, and the peripheral clocks that are present in nearly every tissue and organ system. Both the central and peripheral clocks can be reset by environmental cues, also known as Zeitgebers (German for 'timegivers'). The predominant Zeitgeber for the central clock is light, which is sensed by retina and signals directly to the SCN. The central clock entrains the peripheral clocks through neuronal and hormonal signals, body temperature and feeding-related cues, aligning all clocks with the external light/dark cycle. Circadian rhythms allow an organism to achieve temporal homeostasis with its environment at the molecular level by regulating gene expression to create a peak of protein expression once every 24 hours to control when a particular physiological process is most active with respect to the solar day. Transcription and translation of core clock components (CLOCK, NPAS2, BMAL1, BMAL2, PER1, PER2, PER3, CRY1 and CRY2) plays a critical role in rhythm generation, whereas delays imposed by post-translational modifications (PTMs) are important for determining the period (tau) of the rhythms (tau refers to the period of a rhythm and is the length, in time, of one complete cycle). A diurnal rhythm is synchronized with the day/night cycle, while the ultradian and infradian rhythms have a period shorter and longer than 24 hours, respectively. Disruptions in the circadian rhythms contribute to the pathology of cardiovascular diseases, cancer, metabolic syndromes and aging. A transcription/translation feedback loop (TTFL) forms the core of the molecular circadian clock mechanism. Transcription factors, CLOCK or NPAS2 and BMAL1 or BMAL2, form the positive limb of the feedback loop, act in the form of a heterodimer and activate the transcription of core clock genes and clock-controlled genes (involved in key metabolic processes), harboring E-box elements (5'-CACGTG-3') within their promoters. The core clock genes: PER1/2/3 and CRY1/2 which are transcriptional repressors form the negative limb of the feedback loop and interact with the CLOCK|NPAS2-BMAL1|BMAL2 heterodimer inhibiting its activity and thereby negatively regulating their own expression. This heterodimer also activates nuclear receptors NR1D1/2 and RORA/B/G, which form a second feedback loop and which activate and repress BMAL1 transcription, respectively. The CLOCK-BMAL2 heterodimer activates the transcription of SERPINE1/PAI1 and BHLHE40/DEC1. This is Basic helix-loop-helix ARNT-like protein 2 (Bmal2) from Mus musculus (Mouse).